Here is an 83-residue protein sequence, read N- to C-terminus: Alpha-neurotoxin NTX-3 (83 aa).

The first 21 residues, 1 to 21 (MKTLLLTLLVVTIVCLDLGYT), serve as a signal peptide directing secretion. 4 disulfide bridges follow: cysteine 24–cysteine 45, cysteine 38–cysteine 62, cysteine 64–cysteine 75, and cysteine 76–cysteine 81.

Belongs to the three-finger toxin family. Short-chain subfamily. Type I alpha-neurotoxin sub-subfamily. In terms of tissue distribution, expressed by the venom gland.

Its subcellular location is the secreted. Binds to muscle nicotinic acetylcholine receptor (nAChR) and inhibit acetylcholine from binding to the receptor, thereby impairing neuromuscular transmission. In Naja sputatrix (Malayan spitting cobra), this protein is Alpha-neurotoxin NTX-3.